The primary structure comprises 254 residues: Trans-aconitate 2-methyltransferase (254 aa).

Belongs to the methyltransferase superfamily. Tam family.

The protein localises to the cytoplasm. The enzyme catalyses trans-aconitate + S-adenosyl-L-methionine = (E)-3-(methoxycarbonyl)pent-2-enedioate + S-adenosyl-L-homocysteine. Functionally, catalyzes the S-adenosylmethionine monomethyl esterification of trans-aconitate. The sequence is that of Trans-aconitate 2-methyltransferase from Mycobacterium sp. (strain JLS).